The sequence spans 134 residues: UPF0299 membrane protein KPK_1586 (134 aa).

Helical transmembrane passes span 5 to 25 (LTII…LYAG), 26 to 46 (IFIA…MLIL), 66 to 86 (ILIR…MQYW), and 93 to 113 (LGPV…VVSW).

This sequence belongs to the UPF0299 family.

It localises to the cell inner membrane. This is UPF0299 membrane protein KPK_1586 from Klebsiella pneumoniae (strain 342).